The sequence spans 411 residues: LL-diaminopimelate aminotransferase 1 (411 aa).

Tyr-15 and Gly-42 together coordinate substrate. Residues Tyr-72, 108–109, Tyr-132, Asn-187, Tyr-218, and 246–248 contribute to the pyridoxal 5'-phosphate site; these read SK and SFS. The substrate site is built by Lys-109, Tyr-132, and Asn-187. At Lys-249 the chain carries N6-(pyridoxal phosphate)lysine. 2 residues coordinate pyridoxal 5'-phosphate: Arg-257 and Asn-292. Residues Asn-292 and Arg-388 each coordinate substrate.

The protein belongs to the class-I pyridoxal-phosphate-dependent aminotransferase family. LL-diaminopimelate aminotransferase subfamily. In terms of assembly, homodimer. Pyridoxal 5'-phosphate is required as a cofactor.

It carries out the reaction (2S,6S)-2,6-diaminopimelate + 2-oxoglutarate = (S)-2,3,4,5-tetrahydrodipicolinate + L-glutamate + H2O + H(+). It functions in the pathway amino-acid biosynthesis; L-lysine biosynthesis via DAP pathway; LL-2,6-diaminopimelate from (S)-tetrahydrodipicolinate (aminotransferase route): step 1/1. Involved in the synthesis of meso-diaminopimelate (m-DAP or DL-DAP), required for both lysine and peptidoglycan biosynthesis. Catalyzes the direct conversion of tetrahydrodipicolinate to LL-diaminopimelate. In Nostoc sp. (strain PCC 7120 / SAG 25.82 / UTEX 2576), this protein is LL-diaminopimelate aminotransferase 1.